Consider the following 4158-residue polypeptide: Dynein axonemal heavy chain 6 (4158 aa).

Residues 1–1433 (MTFRATDSEF…VARMALSQYT (1433 aa)) are stem. 192 to 199 (IIRENEHL) is an ATP binding site. Residues 805–859 (CVHLGSDLEELNNEVNEVKLQAQDPQILDISADQDKIRLILNNLQSVLADLQKRA) adopt a coiled-coil conformation. AAA stretches follow at residues 1434–1655 (YGYE…VLVM), 1715–1948 (STIV…KKCS), 2058–2306 (KYNR…CVQG), and 2408–2659 (DYNL…LRRR). Residues 1472-1479 (GPAGTGKT), 1753-1760 (GPTGGGKT), 2096-2103 (GITGVGKS), and 2447-2454 (GVGGTGKQ) contribute to the ATP site. The interval 2676-2961 (SMLSEKRKQI…KTMALTKARL (286 aa)) is stalk. Residues 2901-2996 (KRQKLRAAQA…EEISNITGNV (96 aa)) are a coiled coil. 2 AAA regions span residues 3042–3272 (LGDP…AIKT) and 3509–3730 (LTDF…NLKL).

The protein belongs to the dynein heavy chain family. The dynein complex consists of at least two heavy chains and a number of intermediate and light chains. As to expression, expressed in several tissues, including brain, pituitary, testis and trachea, with highest levels in testis.

The protein resides in the cytoplasm. Its subcellular location is the cytoskeleton. The protein localises to the cilium axoneme. Force generating protein of respiratory cilia. Produces force towards the minus ends of microtubules. Dynein has ATPase activity; the force-producing power stroke is thought to occur on release of ADP. The sequence is that of Dynein axonemal heavy chain 6 from Homo sapiens (Human).